We begin with the raw amino-acid sequence, 38 residues long: Photosystem II reaction center protein T (38 aa).

Residues Ala3–Phe23 traverse the membrane as a helical segment.

It belongs to the PsbT family. PSII is composed of 1 copy each of membrane proteins PsbA, PsbB, PsbC, PsbD, PsbE, PsbF, PsbH, PsbI, PsbJ, PsbK, PsbL, PsbM, PsbT, PsbY, PsbZ, Psb30/Ycf12, at least 3 peripheral proteins of the oxygen-evolving complex and a large number of cofactors. It forms dimeric complexes.

The protein localises to the plastid. Its subcellular location is the chloroplast thylakoid membrane. Its function is as follows. Found at the monomer-monomer interface of the photosystem II (PS II) dimer, plays a role in assembly and dimerization of PSII. PSII is a light-driven water plastoquinone oxidoreductase, using light energy to abstract electrons from H(2)O, generating a proton gradient subsequently used for ATP formation. The protein is Photosystem II reaction center protein T of Secale cereale (Rye).